The sequence spans 426 residues: MYPYSESDAQRLHQEAPKASQLAHSEVDLRSDFSRDRARVLHSAALRRLADKTQVVGPRDGDTPRTRLTHSLEVAQIARGMGSGLGLDPELSELAGLCHDIGHPPYGHNGEKALNEVAAACGGFEGNAQTLRILTRLEPKVVSADGTSFGLNLTRAALDAACKYPWTKTSPDGTINRKYGAYDEDAHILEWVRRGHTDLRPSLEAQTMDFSDDIAYSVHDVEDGIVAGRIDLKVLWDLVELAALAQKGARAFGGDPEELIEGAATLRELPVVAAAADFDASLSSYAALKAMTSELVGRYVGSTIAATRAAARLGEYEFGRMHGELVIRPEADREVRLLKTLAVLYVMDDPGHLARQDRQRDRIFRVFDYLTLGAPGSLDPMYRQWFLEADDDAGRARVVVDQIASMTESRLERLARNASGISGFLG.

The tract at residues 1–23 is disordered; it reads MYPYSESDAQRLHQEAPKASQLA. The HD domain maps to 67–217; sequence RLTHSLEVAQ…MDFSDDIAYS (151 aa).

The protein belongs to the dGTPase family. Type 2 subfamily.

The polypeptide is Deoxyguanosinetriphosphate triphosphohydrolase-like protein (Corynebacterium efficiens (strain DSM 44549 / YS-314 / AJ 12310 / JCM 11189 / NBRC 100395)).